Consider the following 106-residue polypeptide: Cell division topological specificity factor (106 aa).

This sequence belongs to the MinE family.

Its function is as follows. Prevents the cell division inhibition by proteins MinC and MinD at internal division sites while permitting inhibition at polar sites. This ensures cell division at the proper site by restricting the formation of a division septum at the midpoint of the long axis of the cell. The protein is Cell division topological specificity factor of Prochlorococcus marinus subsp. pastoris (strain CCMP1986 / NIES-2087 / MED4).